The following is an 85-amino-acid chain: MPIRVAIVSPEQEVWSGDADMVVARTTDGDLGVLPGHVPLLGLLAPGGTVRVKTGGREISASVDGGFISVTHQGVSILAETAKLT.

This sequence belongs to the ATPase epsilon chain family. As to quaternary structure, F-type ATPases have 2 components, CF(1) - the catalytic core - and CF(0) - the membrane proton channel. CF(1) has five subunits: alpha(3), beta(3), gamma(1), delta(1), epsilon(1). CF(0) has three main subunits: a, b and c.

The protein localises to the cell membrane. Its function is as follows. Produces ATP from ADP in the presence of a proton gradient across the membrane. In Frankia casuarinae (strain DSM 45818 / CECT 9043 / HFP020203 / CcI3), this protein is ATP synthase epsilon chain.